We begin with the raw amino-acid sequence, 175 residues long: Bifunctional protein PyrR (175 aa).

Residues 40-41 (TR), arginine 85, 102-110 (DDVLYTGRT), arginine 135, and valine 159 each bind substrate. Positions 98-110 (VVIIDDVLYTGRT) match the PRPP-binding motif.

Belongs to the purine/pyrimidine phosphoribosyltransferase family. PyrR subfamily. In terms of assembly, homodimer and homohexamer; in equilibrium.

The catalysed reaction is UMP + diphosphate = 5-phospho-alpha-D-ribose 1-diphosphate + uracil. Functionally, regulates transcriptional attenuation of the pyrimidine nucleotide (pyr) operon by binding in a uridine-dependent manner to specific sites on pyr mRNA. This disrupts an antiterminator hairpin in the RNA and favors formation of a downstream transcription terminator, leading to a reduced expression of downstream genes. In terms of biological role, also displays a weak uracil phosphoribosyltransferase activity which is not physiologically significant. This Staphylococcus epidermidis (strain ATCC 35984 / DSM 28319 / BCRC 17069 / CCUG 31568 / BM 3577 / RP62A) protein is Bifunctional protein PyrR.